A 65-amino-acid polypeptide reads, in one-letter code: Defensin-B3 (65 aa).

The signal sequence occupies residues 1-21 (MRLLLVFFFLSLLDQAPPARS). Cystine bridges form between cysteine 29-cysteine 58, cysteine 36-cysteine 50, and cysteine 40-cysteine 59. A propeptide spanning residues 62–65 (ESPR) is cleaved from the precursor.

This sequence belongs to the beta-defensin family. As to expression, lowly expressed in spleen, and expressed at lower levels in kidney, lung and testis.

The protein localises to the secreted. In terms of biological role, has antimicrobial activity. The polypeptide is Defensin-B3 (Ornithorhynchus anatinus (Duckbill platypus)).